Here is a 132-residue protein sequence, read N- to C-terminus: SH2 domain-containing protein 1B2 (132 aa).

The SH2 domain maps to 5–101; sequence YYHGCLTKRE…GMVVHLSNPI (97 aa).

In terms of assembly, interacts with SLAMF1 (phosphorylated). Interacts with CD244. Interacts with Src kinases HCK, LYN, FYN, FGR and LCK (via kinase domains). In terms of tissue distribution, expressed in spleen. Expressed in macrophages, CD8(+) T-Cells and NK cells. Conflictingly found only in NK cells.

Its subcellular location is the cytoplasm. In terms of biological role, cytoplasmic adapter regulating receptors of the signaling lymphocytic activation molecule (SLAM) family. In SLAM signaling may cooperate with Sh2d1a/SAP. Plays a role in regulation of effector functions of natural killer (NK) cells by controlling signal transduction through Cd244/2b4. However, conflicting results are reported which may reflect the use of different strain backgrounds. Proposed to act as an inhibitor of Cd244-mediated NK cell function including cytotoxicity and IFN-gamma production, the latter found also by triggering Klra4 and Klrk1 next to Cd244. Seems to positively regulate Cd244- and Cd84-dependent NK cell functions implicating Cd244-mediated phosphorylation of Vav1. This Mus musculus (Mouse) protein is SH2 domain-containing protein 1B2 (Sh2d1b2).